The primary structure comprises 799 residues: Dipeptidyl peptidase family member 1 (799 aa).

Residues 1–31 (MTAEADLLEGYDEELGGNESQKRDCKGITTA) are Cytoplasmic-facing. Residues 32–52 (IVVVLLILVMIFAALVFFTPL) form a helical; Signal-anchor for type II membrane protein membrane-spanning segment. Topologically, residues 53-799 (FAAKSFGSWR…FLRQCFYTDK (747 aa)) are lumenal. N-linked (GlcNAc...) asparagine glycosylation is found at N64, N138, N267, and N335. The cysteines at positions 474 and 477 are disulfide-linked. An N-linked (GlcNAc...) asparagine glycan is attached at N481. C482 and C500 are joined by a disulfide. A glycan (N-linked (GlcNAc...) asparagine) is linked at N512. Active-site charge relay system residues include S669, D742, and H774. A disulfide bridge connects residues C689 and C794.

Belongs to the peptidase S9B family. DPPIV subfamily.

The protein localises to the cell membrane. In terms of biological role, removes N-terminal dipeptides sequentially from polypeptides. Essential for control of distal tip cell migration. This chain is Dipeptidyl peptidase family member 1 (dpf-1), found in Caenorhabditis elegans.